We begin with the raw amino-acid sequence, 169 residues long: Protein pid-1 (169 aa).

Residues Ser-137–Ser-151 are compositionally biased toward polar residues. Residues Ser-137 to Ala-169 are disordered.

Component of the pid-1 variant of the PETISCO complex (also called the pid-3, erh-2, tofu-6, and ife-3 small RNA complex) containing at least pid-1, tofu-6, ife-3, pid-3, and erh-2, which is required for the biogenesis of a class of 21 nucleotide PIWI-interacting RNAs (piRNAs) that possess a uracil residue at the 5'-end (also called 21U-RNAs). Within the complex interacts with pid-3; the interaction is direct. Within the complex interacts with erh-2. Within the complex interacts with tofu-6. Expressed predominantly in the germline (at protein level).

The protein localises to the cytoplasm. Its subcellular location is the nucleus. It is found in the perinuclear region. In terms of biological role, component of the pid-1 variant of the PETISCO complex which is required for the biogenesis of a class of 21 nucleotide PIWI-interacting RNAs (piRNAs) that possess a uracil residue at the 5'-end (also called 21U-RNAs). Within the complex acts as an adapter which binds to the complex via erh-2. Involved in the biogenesis of 21U-RNAs which guide the piwi protein prg-1 to its DNA targets for silencing. Plays a role in small RNA-directed transgenerational epigenetic inheritance. This chain is Protein pid-1, found in Caenorhabditis elegans.